We begin with the raw amino-acid sequence, 309 residues long: tRNA pseudouridine synthase B (309 aa).

The active-site Nucleophile is the aspartate 40.

The protein belongs to the pseudouridine synthase TruB family. Type 1 subfamily.

The enzyme catalyses uridine(55) in tRNA = pseudouridine(55) in tRNA. Responsible for synthesis of pseudouridine from uracil-55 in the psi GC loop of transfer RNAs. This chain is tRNA pseudouridine synthase B, found in Mycobacterium avium (strain 104).